We begin with the raw amino-acid sequence, 747 residues long: Probable type III restriction-modification enzyme HindVI Mod subunit (747 aa).

Residues Asp-267–Tyr-270 form a binding of S-adenosyl methionine region.

The protein belongs to the N(4)/N(6)-methyltransferase family. In terms of assembly, homodimer, also forms a functional restriction-competent complex with Res.

It catalyses the reaction a 2'-deoxyadenosine in DNA + S-adenosyl-L-methionine = an N(6)-methyl-2'-deoxyadenosine in DNA + S-adenosyl-L-homocysteine + H(+). A beta subtype methylase that binds the system-specific DNA recognition site 5'-CGAAT-3' and methylates A-4 (of only 1 strand). DNA restriction requires both the Res and Mod subunits. The protein is Probable type III restriction-modification enzyme HindVI Mod subunit of Haemophilus influenzae (strain ATCC 51907 / DSM 11121 / KW20 / Rd).